The primary structure comprises 269 residues: Alcohol dehydrogenase-related 31 kDa protein (269 aa).

11-34 (YVADCGGIALETCKVLMTKNIAKL) is a binding site for NAD(+). Ser-139 is a binding site for substrate. Tyr-152 functions as the Proton acceptor in the catalytic mechanism.

Belongs to the short-chain dehydrogenases/reductases (SDR) family.

The sequence is that of Alcohol dehydrogenase-related 31 kDa protein (Adhr) from Drosophila lebanonensis (Fruit fly).